The primary structure comprises 155 residues: Ribosome maturation factor RimP (155 aa).

This sequence belongs to the RimP family.

Its subcellular location is the cytoplasm. Its function is as follows. Required for maturation of 30S ribosomal subunits. The polypeptide is Ribosome maturation factor RimP (Hamiltonella defensa subsp. Acyrthosiphon pisum (strain 5AT)).